Consider the following 235-residue polypeptide: Thymidylate kinase (235 aa).

An ATP-binding site is contributed by 10 to 17 (GINGVEKS).

This sequence belongs to the thymidylate kinase family.

The catalysed reaction is dTMP + ATP = dTDP + ADP. It participates in pyrimidine metabolism; dTTP biosynthesis. Functionally, catalyzes the conversion of dTMP to dTDP. The chain is Thymidylate kinase (TMK) from African swine fever virus (isolate Pig/Kenya/KEN-50/1950) (ASFV).